The primary structure comprises 109 residues: Ribonuclease P protein component (109 aa).

Belongs to the RnpA family. In terms of assembly, consists of a catalytic RNA component (M1 or rnpB) and a protein subunit.

It carries out the reaction Endonucleolytic cleavage of RNA, removing 5'-extranucleotides from tRNA precursor.. In terms of biological role, RNaseP catalyzes the removal of the 5'-leader sequence from pre-tRNA to produce the mature 5'-terminus. It can also cleave other RNA substrates such as 4.5S RNA. The protein component plays an auxiliary but essential role in vivo by binding to the 5'-leader sequence and broadening the substrate specificity of the ribozyme. The polypeptide is Ribonuclease P protein component (Streptococcus agalactiae serotype Ia (strain ATCC 27591 / A909 / CDC SS700)).